The following is a 502-amino-acid chain: Archaemetzincin-1 (502 aa).

H262 serves as a coordination point for Zn(2+). Residue E263 is the Proton acceptor of the active site. Zn(2+) is bound by residues H266, C273, C278, C297, and C300. The segment at 336 to 383 (GEPSVSEDTLPFSADSGMGCESDTEPVTSPSEPVTPDGWSHPFPDGPE) is disordered.

It belongs to the peptidase M54 family. Requires Zn(2+) as cofactor.

Probable zinc metalloprotease. This chain is Archaemetzincin-1 (Amz1), found in Mus musculus (Mouse).